A 25-amino-acid polypeptide reads, in one-letter code: Alpha-lytic protease (25 aa).

Belongs to the peptidase S1 family.

It carries out the reaction Preferential cleavage: Ala-|-Xaa, Val-|-Xaa in bacterial cell walls, elastin and other proteins.. The sequence is that of Alpha-lytic protease from Achromobacter lyticus.